The primary structure comprises 1011 residues: RAS protein activator like-3 (1011 aa).

A disordered region spans residues 1 to 38 (MDPPSPSRTSQTQPTATSPLTSYRWHTGGGGEKAAGGF). The span at 7–22 (SRTSQTQPTATSPLTS) shows a compositional bias: low complexity. Serine 18 and serine 51 each carry phosphoserine. Disordered stretches follow at residues 52–136 (HQEP…PVWD), 151–197 (GGEE…GPNQ), and 209–230 (KEKK…GSRE). A compositionally biased stretch (basic residues) spans 81 to 95 (SRLRLSKALWGRHKN). Over residues 100-117 (PDPEPEQEAPELEPEPEL) the composition is skewed to acidic residues. Pro residues predominate over residues 118–131 (EPPTPQIPEAPTPN). Serine 164, serine 166, serine 167, and serine 170 each carry phosphoserine. Basic and acidic residues predominate over residues 179–190 (RDPDRMPGKTEP). One can recognise a PH domain in the interval 197–293 (QVHNVRGLLK…WIEDLRRQFQ (97 aa)). Phosphoserine occurs at positions 224, 228, and 231. Position 234 is a phosphothreonine (threonine 234). The C2 domain occupies 284–404 (WIEDLRRQFQ…APAAGLERWF (121 aa)). Residues 474–682 (GRAQALVTDL…PAMQCFLDQV (209 aa)) form the Ras-GAP domain. Disordered regions lie at residues 756–885 (QVHS…LGTH) and 987–1011 (LSPR…GDTT). 2 positions are modified to phosphoserine: serine 787 and serine 790. The segment covering 792–808 (RRSESWARPRPDEERPL) has biased composition (basic and acidic residues). Polar residues-rich tracts occupy residues 871 to 882 (QMDQPQDRNQAL) and 987 to 999 (LSPR…SQPQ). Positions 888-988 (VNKLAELQCE…RDAVQSLQLS (101 aa)) form a coiled coil. Serine 988 is subject to Phosphoserine.

Predominantly expressed in cells of hematopoietic lineages.

The protein resides in the cytoplasm. Its subcellular location is the cell cortex. Its function is as follows. Functions as a Ras GTPase-activating protein. Plays an important role in the expansion and functions of natural killer T (NKT) cells in the liver by negatively regulating RAS activity and the down-stream ERK signaling pathway. The chain is RAS protein activator like-3 (RASAL3) from Homo sapiens (Human).